The following is a 135-amino-acid chain: Poly [ADP-ribose] polymerase 1 (135 aa).

Positions 1–21 constitute a PARP alpha-helical domain; it reads QAKVEMLDNLLDIEVAYSLLK. In terms of domain architecture, PARP catalytic spans 30 to 135; it reads DPIDINYEKL…APVTGYMFGK (106 aa). NAD(+)-binding positions include 104–106, Gly-113, and Arg-120; that span reads HGS. The active site involves Lys-135.

Belongs to the ARTD/PARP family. Homodimer; PARP-type zinc-fingers from separate parp1 molecules form a dimer module that specifically recognizes DNA strand breaks. Poly-ADP-ribosylated on serine, glutamate and aspartate residues by autocatalysis. Auto-ADP-ribosylation on serine takes place following interaction with HPF1. Auto poly-ADP-ribosylation on serine residues promotes its dissociation from chromatin.

Its subcellular location is the chromosome. The protein resides in the nucleus. It localises to the nucleolus. It is found in the cytoplasm. The protein localises to the cytosol. It catalyses the reaction NAD(+) + (ADP-D-ribosyl)n-acceptor = nicotinamide + (ADP-D-ribosyl)n+1-acceptor + H(+).. It carries out the reaction L-seryl-[protein] + NAD(+) = O-(ADP-D-ribosyl)-L-seryl-[protein] + nicotinamide + H(+). The enzyme catalyses L-aspartyl-[protein] + NAD(+) = 4-O-(ADP-D-ribosyl)-L-aspartyl-[protein] + nicotinamide. The catalysed reaction is L-glutamyl-[protein] + NAD(+) = 5-O-(ADP-D-ribosyl)-L-glutamyl-[protein] + nicotinamide. It catalyses the reaction L-tyrosyl-[protein] + NAD(+) = O-(ADP-D-ribosyl)-L-tyrosyl-[protein] + nicotinamide + H(+). It carries out the reaction L-histidyl-[protein] + NAD(+) = N(tele)-(ADP-D-ribosyl)-L-histidyl-[protein] + nicotinamide + H(+). With respect to regulation, ADP-ribosyltransferase activity is regulated via an allosteric activation mechanism. In absence of activation signal, parp1 is autoinhibited by the PARP alpha-helical domain (also named HD region), which prevents effective NAD(+)-binding. Activity is highly stimulated by signals, such as DNA strand breaks. Binding to damaged DNA unfolds the PARP alpha-helical domain, relieving autoinhibition. Poly-ADP-ribosyltransferase activity is tightly regulated and parp1 is removed from damaged chromatin following initial poly-ADP-ribosylation of chromatin to avoid prolonged residence (trapping) that has cytotoxic consequences. A number of factors or post-translational modifications (auto-poly-ADP-ribosylation) promote parp1 removal from chromatin. Poly-ADP-ribosyltransferase that mediates poly-ADP-ribosylation of proteins and plays a key role in DNA repair. Mediates glutamate, aspartate, serine, histidine or tyrosine ADP-ribosylation of proteins: the ADP-D-ribosyl group of NAD(+) is transferred to the acceptor carboxyl group of target residues and further ADP-ribosyl groups are transferred to the 2'-position of the terminal adenosine moiety, building up a polymer with an average chain length of 20-30 units. Serine ADP-ribosylation of proteins constitutes the primary form of ADP-ribosylation of proteins in response to DNA damage. Specificity for the different amino acids is conferred by interacting factors, such as hpf1 and nmnat1. Following interaction with hpf1, catalyzes serine ADP-ribosylation of target proteins; hpf1 confers serine specificity by completing the parp1 active site. Also catalyzes tyrosine ADP-ribosylation of target proteins following interaction with hpf1. Following interaction with nmnat1, catalyzes glutamate and aspartate ADP-ribosylation of target proteins; nmnat1 confers glutamate and aspartate specificity. Parp1 initiates the repair of DNA breaks: recognizes and binds DNA breaks within chromatin and recruits hpf1, licensing serine ADP-ribosylation of target proteins, such as histones (H2BS6ADPr and H3S10ADPr), thereby promoting decompaction of chromatin and the recruitment of repair factors leading to the reparation of DNA strand breaks. In addition to base excision repair (BER) pathway, also involved in double-strand breaks (DSBs) repair. Mediates the poly-ADP-ribosylation of a number of proteins. In addition to proteins, also able to ADP-ribosylate DNA: catalyzes ADP-ribosylation of DNA strand break termini containing terminal phosphates and a 2'-OH group in single- and double-stranded DNA, respectively. Parp1-mediated DNA repair in neurons plays a role in sleep: senses DNA damage in neurons and promotes sleep, facilitating efficient DNA repair. In addition to DNA repair, also involved in other processes, such as transcription regulation, programmed cell death, membrane repair, adipogenesis and innate immunity. Acts as a repressor of transcription: binds to nucleosomes and modulates chromatin structure in a manner similar to histone H1, thereby altering RNA polymerase II. Acts both as a positive and negative regulator of transcription elongation, depending on the context. Poly-ADP-ribose chains generated by parp1 also play a role in poly-ADP-ribose-dependent cell death, a process named parthanatos. Also acts as a negative regulator of the cGAS-STING pathway by mediating poly-ADP-ribosylation and inactivation of cgas. Acts as a negative regulator of adipogenesis by catalyzing poly ADP-ribosylation of histone H2B on 'Glu-35' (H2BE35ADPr). In Oncorhynchus masou (Cherry salmon), this protein is Poly [ADP-ribose] polymerase 1 (parp1).